Reading from the N-terminus, the 230-residue chain is 5'-methylthioadenosine/S-adenosylhomocysteine nucleosidase (230 aa).

The active-site Proton acceptor is E12. Residues G78, I153, and 174 to 175 (ME) contribute to the substrate site. D198 serves as the catalytic Proton donor.

The protein belongs to the PNP/UDP phosphorylase family. MtnN subfamily.

The enzyme catalyses S-adenosyl-L-homocysteine + H2O = S-(5-deoxy-D-ribos-5-yl)-L-homocysteine + adenine. The catalysed reaction is S-methyl-5'-thioadenosine + H2O = 5-(methylsulfanyl)-D-ribose + adenine. It catalyses the reaction 5'-deoxyadenosine + H2O = 5-deoxy-D-ribose + adenine. It participates in amino-acid biosynthesis; L-methionine biosynthesis via salvage pathway; S-methyl-5-thio-alpha-D-ribose 1-phosphate from S-methyl-5'-thioadenosine (hydrolase route): step 1/2. Its function is as follows. Catalyzes the irreversible cleavage of the glycosidic bond in both 5'-methylthioadenosine (MTA) and S-adenosylhomocysteine (SAH/AdoHcy) to adenine and the corresponding thioribose, 5'-methylthioribose and S-ribosylhomocysteine, respectively. Also cleaves 5'-deoxyadenosine, a toxic by-product of radical S-adenosylmethionine (SAM) enzymes, into 5-deoxyribose and adenine. The polypeptide is 5'-methylthioadenosine/S-adenosylhomocysteine nucleosidase (Shewanella loihica (strain ATCC BAA-1088 / PV-4)).